We begin with the raw amino-acid sequence, 156 residues long: RNTPGPHGLTPYEILYGAPPPLVNFHDPDMSELTNSPSLQAHLQALQTVQREIWRPLAEAYRDRLDQPVIPHPFRTGDSVWVRRHQTKNSEPRWKGPYTVLLTTPTALKVDGIAAWIHAAHVKAATTPPAGTASGPTWKVQRSQNPLKIRLTRGAP.

Mg(2+) serves as cofactor. In terms of processing, specific enzymatic cleavages by the viral protease yield mature proteins. The protease is released by autocatalytic cleavage. The polyprotein is cleaved during and after budding, this process is termed maturation.

Integrase catalyzes viral DNA integration into the host chromosome, by performing a series of DNA cutting and joining reactions. This enzyme activity takes place after virion entry into a cell and reverse transcription of the RNA genome in dsDNA. The first step in the integration process is 3' processing. This step requires a complex comprising the viral genome, matrix protein and integrase. This complex is called the pre-integration complex (PIC). The integrase protein removes 2 nucleotides from each 3' end of the viral DNA, leaving recessed CA OH's at the 3' ends. In the second step that requires cell division, the PIC enters cell nucleus. In the third step, termed strand transfer, the integrase protein joins the previously processed 3' ends to the 5' ends of strands of target cellular DNA at the site of integration. The last step is viral DNA integration into host chromosome. The protein is Gag-Pol polyprotein (gag-pol) of Mink cell focus-forming murine leukemia virus (isolate CI-3).